The sequence spans 424 residues: MTAITDIIAREILDSRGNPTVEVDVYLEDGSMGRAAVPSGASTGAHEAVELRDGGKRYLGKGVEKAVEAANTEIFDAIGGIDAENQIQIDNIMIELDGTPNKSRLGANAILGVSLAVAKAAAQASGLPLYRYVGGASACLLPVPMMNIINGGAHADNPIDFQEFMILPVGADSIAEAVRMGSEVFHTLRKELAAQGHNTNVGDEGGFAPGLKSAPEALDFIMKSIEKAGYKPGDDMCLGLDCASTEFFKDGKYVLEGEGRTLESGAMAEYLAELAANYPIISIEDGMAEDDWDGWKTLTDLAGKKTQLVGDDLFVTNSARLRDGIRMGVANSILVKVNQIGTLTETLDAVNTAHKAAYTAVMSHRSGETEDSTIADLAVATNCGQIKTGSLSRSDRLAKYNQLIRIEEGLGPQAQYAGRSIIRG.

Glutamine 162 is a binding site for (2R)-2-phosphoglycerate. Catalysis depends on glutamate 204, which acts as the Proton donor. Positions 241, 284, and 311 each coordinate Mg(2+). Residues lysine 336, arginine 365, serine 366, and lysine 387 each coordinate (2R)-2-phosphoglycerate. Lysine 336 functions as the Proton acceptor in the catalytic mechanism.

It belongs to the enolase family. Mg(2+) serves as cofactor.

The protein localises to the cytoplasm. It localises to the secreted. The protein resides in the cell surface. It catalyses the reaction (2R)-2-phosphoglycerate = phosphoenolpyruvate + H2O. It participates in carbohydrate degradation; glycolysis; pyruvate from D-glyceraldehyde 3-phosphate: step 4/5. Functionally, catalyzes the reversible conversion of 2-phosphoglycerate (2-PG) into phosphoenolpyruvate (PEP). It is essential for the degradation of carbohydrates via glycolysis. The polypeptide is Enolase (Rhizobium johnstonii (strain DSM 114642 / LMG 32736 / 3841) (Rhizobium leguminosarum bv. viciae)).